We begin with the raw amino-acid sequence, 735 residues long: Photosystem I P700 chlorophyll a apoprotein A2 (735 aa).

The next 8 helical transmembrane spans lie at 47 to 70 (IFAS…FHVA), 136 to 159 (LYVG…LHLQ), 176 to 200 (LNHH…HVAI), 274 to 292 (MAHH…GHMY), 331 to 354 (LHFQ…QHMY), 370 to 396 (AALY…IFWI), 418 to 440 (AIIS…LYVH), and 518 to 536 (FLVH…LILV). [4Fe-4S] cluster is bound by residues C560 and C569. 2 consecutive transmembrane segments (helical) span residues 576–597 (AFYL…YWHW) and 644–666 (LSVW…MFLI). The chlorophyll a site is built by H655, M663, and Y671. Position 672 (W672) interacts with phylloquinone. A helical transmembrane segment spans residues 708-728 (LVGLAHFSVGYVFTYAAFVIA).

It belongs to the PsaA/PsaB family. The PsaA/B heterodimer binds the P700 chlorophyll special pair and subsequent electron acceptors. PSI consists of a core antenna complex that captures photons, and an electron transfer chain that converts photonic excitation into a charge separation. The eukaryotic PSI reaction center is composed of at least 11 subunits. P700 is a chlorophyll a/chlorophyll a' dimer, A0 is one or more chlorophyll a, A1 is one or both phylloquinones and FX is a shared 4Fe-4S iron-sulfur center. serves as cofactor.

It is found in the plastid. The protein localises to the chloroplast thylakoid membrane. It catalyses the reaction reduced [plastocyanin] + hnu + oxidized [2Fe-2S]-[ferredoxin] = oxidized [plastocyanin] + reduced [2Fe-2S]-[ferredoxin]. Its function is as follows. PsaA and PsaB bind P700, the primary electron donor of photosystem I (PSI), as well as the electron acceptors A0, A1 and FX. PSI is a plastocyanin/cytochrome c6-ferredoxin oxidoreductase, converting photonic excitation into a charge separation, which transfers an electron from the donor P700 chlorophyll pair to the spectroscopically characterized acceptors A0, A1, FX, FA and FB in turn. Oxidized P700 is reduced on the lumenal side of the thylakoid membrane by plastocyanin or cytochrome c6. This chain is Photosystem I P700 chlorophyll a apoprotein A2, found in Tetradesmus obliquus (Green alga).